The primary structure comprises 95 residues: Large ribosomal subunit protein bL21 (95 aa).

Belongs to the bacterial ribosomal protein bL21 family. As to quaternary structure, part of the 50S ribosomal subunit. Contacts protein L20.

In terms of biological role, this protein binds to 23S rRNA in the presence of protein L20. This Chlorobaculum tepidum (strain ATCC 49652 / DSM 12025 / NBRC 103806 / TLS) (Chlorobium tepidum) protein is Large ribosomal subunit protein bL21.